The chain runs to 392 residues: GTPase Obg (392 aa).

The Obg domain occupies 1 to 159 (MKFVDEATIK…RELRLELLLL (159 aa)). Residues 160–333 (ADVGMLGLPN…VCNELSDFMD (174 aa)) enclose the OBG-type G domain. GTP is bound by residues 166–173 (GLPNAGKS), 191–195 (FTTLI), 213–216 (DIPG), 283–286 (NKTD), and 314–316 (AAV). Mg(2+) contacts are provided by S173 and T193. Residues 364–392 (GKNVVTEDGDDDDDWDDEEDDGHVIYARD) form a disordered region. Residues 370–384 (EDGDDDDDWDDEEDD) are compositionally biased toward acidic residues.

It belongs to the TRAFAC class OBG-HflX-like GTPase superfamily. OBG GTPase family. Monomer. The cofactor is Mg(2+).

The protein localises to the cytoplasm. In terms of biological role, an essential GTPase which binds GTP, GDP and possibly (p)ppGpp with moderate affinity, with high nucleotide exchange rates and a fairly low GTP hydrolysis rate. Plays a role in control of the cell cycle, stress response, ribosome biogenesis and in those bacteria that undergo differentiation, in morphogenesis control. This Aliivibrio salmonicida (strain LFI1238) (Vibrio salmonicida (strain LFI1238)) protein is GTPase Obg.